Here is a 311-residue protein sequence, read N- to C-terminus: Olfactory receptor 4S2 (311 aa).

The Extracellular segment spans residues 1-23 (MEKINNVTEFIFWGLSQSPEIEK). N-linked (GlcNAc...) asparagine glycosylation occurs at Asn-6. A helical membrane pass occupies residues 24-47 (VCFVVFSFFYIIILLGNLLIMLTV). Topologically, residues 48-55 (CLSNLFKS) are cytoplasmic. A helical membrane pass occupies residues 56–77 (PMYFFLSFLSFVDICYSSVTAP). At 78–98 (KMIVDLLAKDKTISYVGCMLQ) the chain is on the extracellular side. Cys-95 and Cys-187 are joined by a disulfide. A helical transmembrane segment spans residues 99–118 (LFGVHFFGCTEIFILTVMAY). Topologically, residues 119 to 137 (DRYVAICKPLHYMTIMNRE) are cytoplasmic. A helical membrane pass occupies residues 138–156 (TCNKMLLGTWVGGFLHSII). The Extracellular segment spans residues 157–193 (QVALVVQLPFCGPNEIDHYFCDVHPVLKLACTETYIV). The helical transmembrane segment at 194 to 217 (GVVVTANSGTIALGSFVILLISYS) threads the bilayer. At 218–233 (IILVSLRKQSAEGRRK) the chain is on the cytoplasmic side. A helical membrane pass occupies residues 234–256 (ALSTCGSHIAMVVIFFGPCTFMY). Over 257 to 267 (MRPDTTFSEDK) the chain is Extracellular. A helical membrane pass occupies residues 268–287 (MVAVFYTIITPMLNPLIYTL). The Cytoplasmic portion of the chain corresponds to 288–311 (RNAEVKNAMKKLWGRNVFLEAKGK).

The protein belongs to the G-protein coupled receptor 1 family.

Its subcellular location is the cell membrane. Odorant receptor. The polypeptide is Olfactory receptor 4S2 (OR4S2) (Homo sapiens (Human)).